A 493-amino-acid chain; its full sequence is Monodehydroascorbate reductase, chloroplastic/mitochondrial (493 aa).

The transit peptide at 1 to 51 directs the protein to the chloroplast and mitochondrion; it reads MSAVRRVMALASTTLPTKSGLSLWCPSSPSLARRFPARFSPIGSRIASRSL. FAD contacts are provided by residues 68–71, Glu95, Arg102, Lys107, and 201–202; these read GGNA and RE. Residues 224-230, Glu248, Arg254, and Gly313 contribute to the NAD(+) site; that span reads GGYIGME. 226–230 lines the NADP(+) pocket; it reads YIGME. The NADP(+) site is built by Arg254 and Gly313. Asp351 is an FAD binding site. 367-368 contacts NAD(+); the sequence is EH. An NADP(+)-binding site is contributed by 367 to 368; the sequence is EH. Val369 lines the FAD pocket. Residue Arg373 coordinates L-ascorbate. Tyr398 serves as a coordination point for FAD. Position 398 (Tyr398) interacts with NAD(+). Residue Tyr398 coordinates NADP(+). Arg400 is a binding site for L-ascorbate.

Belongs to the FAD-dependent oxidoreductase family. As to quaternary structure, interacts in vitro with TRXy. FAD is required as a cofactor.

The protein localises to the plastid. The protein resides in the chloroplast. It localises to the mitochondrion. The enzyme catalyses 2 monodehydro-L-ascorbate radical + NADH + H(+) = 2 L-ascorbate + NAD(+). It catalyses the reaction 2,4,6-trinitrotoluene + NADH = 2,4,6-trinitrotoluene radical + e(-) + NAD(+). Redox regulation of the activity by thioredoxin TRXy1. Functionally, catalyzes the conversion of monodehydroascorbate (MDA) to ascorbate, oxidizing NADH in the process. Mediates phytotoxicity of 2,4,6-trinitrotoluene (TNT), an explosive and environmental pollutant, by reducing TNT and forming a nitro radical that spontaneously reacts with atmospheric oxygen, generating reactive superoxide. Can also use 1-chloro-2,4-dinitrobenzene (CDNB) as substrate, but not 1-chloro-4-nitrobenzene (CNB). This Arabidopsis thaliana (Mouse-ear cress) protein is Monodehydroascorbate reductase, chloroplastic/mitochondrial.